The following is a 117-amino-acid chain: Fluoride-specific ion channel FluC 2 (117 aa).

4 consecutive transmembrane segments (helical) span residues 1-21 (MITI…RALI), 33-53 (IPIA…FMMG), 61-81 (MFPF…TLSS), and 94-114 (IRFV…CFYG). Residues glycine 71 and threonine 74 each contribute to the Na(+) site.

Belongs to the fluoride channel Fluc/FEX (TC 1.A.43) family.

It is found in the cell membrane. The enzyme catalyses fluoride(in) = fluoride(out). Its activity is regulated as follows. Na(+) is not transported, but it plays an essential structural role and its presence is essential for fluoride channel function. Functionally, fluoride-specific ion channel. Important for reducing fluoride concentration in the cell, thus reducing its toxicity. The chain is Fluoride-specific ion channel FluC 2 from Staphylococcus epidermidis (strain ATCC 35984 / DSM 28319 / BCRC 17069 / CCUG 31568 / BM 3577 / RP62A).